We begin with the raw amino-acid sequence, 92 residues long: Envelope glycoprotein J (92 aa).

A signal peptide spans 1 to 22 (MDRYAVRTWGIVGILGCAAVGA). The Extracellular segment spans residues 23 to 49 (APTGPASDTTNATARLPTHPPLIRSGG). Asparagine 33 carries an N-linked (GlcNAc...) asparagine; by host glycan. A helical membrane pass occupies residues 50 to 70 (FAVPLIVGGLCLMILGMACLL). Topologically, residues 71-92 (EVLRRLGRELARCCPHAGQFAP) are cytoplasmic.

It belongs to the alphaherpesvirinae glycoprotein J family.

Its subcellular location is the host Golgi apparatus membrane. It is found in the host endoplasmic reticulum membrane. The protein resides in the host endosome membrane. Functions as an activator of viral protein expression and virus production. In turn, promotes cell-to-cell spread as well as syncytia formation. The protein is Envelope glycoprotein J (gJ) of Homo sapiens (Human).